A 389-amino-acid chain; its full sequence is Putative F-box protein At3g10240 (389 aa).

A disordered region spans residues 1 to 26; it reads MEQQEEKRKIKAYQRKSKRSKSGSSS. Residues 9 to 21 show a composition bias toward basic residues; the sequence is KIKAYQRKSKRSK. The region spanning 21–66 is the F-box domain; it reads KSGSSSIPLDLVSEILLRLPEKSVARFRCVSKPWSSITTEPYFINL.

In Arabidopsis thaliana (Mouse-ear cress), this protein is Putative F-box protein At3g10240.